Here is a 278-residue protein sequence, read N- to C-terminus: Prohibitin-7, mitochondrial (278 aa).

At 1 to 14 the chain is on the mitochondrial matrix side; that stretch reads MNVKKVPNVPGSPA. The helical; Signal-anchor for type II membrane protein transmembrane segment at 15–37 threads the bilayer; that stretch reads LSALLKLGVIGGLGLYCIGSSMY. Over 38–278 the chain is Mitochondrial intermembrane; it reads NVDGGHRAIV…NSSDLLISKQ (241 aa). Positions 186 to 220 form a coiled coil; that stretch reads KEFTEAIEKKQVAAQEAERAKFIVEKAEQDKKSAI.

The protein belongs to the prohibitin family. As to quaternary structure, component of a prohibitin multimeric complex in mitochondrial membranes.

The protein localises to the mitochondrion inner membrane. In terms of biological role, prohibitin probably acts as a holdase/unfoldase for the stabilization of newly synthesized mitochondrial proteins. The polypeptide is Prohibitin-7, mitochondrial (PHB7) (Arabidopsis thaliana (Mouse-ear cress)).